Reading from the N-terminus, the 86-residue chain is Large ribosomal subunit protein uL23 (86 aa).

It belongs to the universal ribosomal protein uL23 family. As to quaternary structure, part of the 50S ribosomal subunit. Contacts protein L29.

Binds to 23S rRNA. One of the proteins that surrounds the polypeptide exit tunnel on the outside of the ribosome. The sequence is that of Large ribosomal subunit protein uL23 from Methanocaldococcus jannaschii (strain ATCC 43067 / DSM 2661 / JAL-1 / JCM 10045 / NBRC 100440) (Methanococcus jannaschii).